A 65-amino-acid chain; its full sequence is Sarcoplasmic/endoplasmic reticulum calcium ATPase regulator ARLN (65 aa).

Methionine 1 bears the N-acetylmethionine mark. Positions 1–36 are disordered; sequence MEVSQAASGTDGVRERRGSFEAGRRNQDEAPQSGMN. Residues 12–28 show a composition bias toward basic and acidic residues; it reads GVRERRGSFEAGRRNQD. Serine 19 bears the Phosphoserine mark. Residues 44 to 64 form a helical membrane-spanning segment; sequence WLDLWLFILFDLALFVFVYLL.

Homooligomer. Can also form heterooligomers with other sarcoplasmic/endoplasmic reticulum calcium ATPase (SERCA) regulators ERLN, PLN, SLN and STRIT1/DWORF. Monomer. Interacts as a monomer with ATP2A2/SERCA2; the interaction results in inhibition of ATP2A2 Ca(2+) affinity. As to expression, in the embryo, expressed in heart, epidermal epithelium, salivary gland, brown fat, intestinal epithelium and bladder urothelium.

It is found in the endoplasmic reticulum membrane. Its function is as follows. Inhibits the activity of the calcium ATPases ATP2A2/SERCA2 and ATP2A3/SERCA3 by decreasing their apparent affinity for Ca(2+). The sequence is that of Sarcoplasmic/endoplasmic reticulum calcium ATPase regulator ARLN (Arln) from Mus musculus (Mouse).